The sequence spans 338 residues: MDKQRVAVIGPGSWGTALSQVLNDNGHEVRIWGNIAEQIDEINQAHTNTRYFKDTVLDEKIKAYHSLAEALDGADAVLFVVPTKVTRLVAKQVAQILDHNVKVMHASKGLEPDSHERISTILEEEIPSELRSEIVVVSGPSHAEETIVRDITLITAASKDLEAAKYVQKLFSNHYFRLYTNTDVVGVETAGALKNIIAVGAGALHGLGYGDNAKAAIITRGLAEITRLGVKLGASPLTYSGLSGVGDLIVTGTSIHSRNWRAGDALGRGEKLADIEANMGMVIEGISTTKAAYELAQELDVYMPITQAIYKVIYQGHDIKEAIFEIMNNEFKAENEWS.

Residues Ser-13, Trp-14, and Lys-108 each coordinate NADPH. Residues Lys-108, Gly-139, and Ser-141 each contribute to the sn-glycerol 3-phosphate site. Ala-143 contacts NADPH. Sn-glycerol 3-phosphate is bound by residues Lys-194, Asp-247, Ser-257, Arg-258, and Asn-259. The active-site Proton acceptor is the Lys-194. NADPH is bound at residue Arg-258. Val-282 and Glu-284 together coordinate NADPH.

This sequence belongs to the NAD-dependent glycerol-3-phosphate dehydrogenase family.

Its subcellular location is the cytoplasm. It carries out the reaction sn-glycerol 3-phosphate + NAD(+) = dihydroxyacetone phosphate + NADH + H(+). It catalyses the reaction sn-glycerol 3-phosphate + NADP(+) = dihydroxyacetone phosphate + NADPH + H(+). Its pathway is membrane lipid metabolism; glycerophospholipid metabolism. In terms of biological role, catalyzes the reduction of the glycolytic intermediate dihydroxyacetone phosphate (DHAP) to sn-glycerol 3-phosphate (G3P), the key precursor for phospholipid synthesis. This is Glycerol-3-phosphate dehydrogenase [NAD(P)+] from Streptococcus gordonii (strain Challis / ATCC 35105 / BCRC 15272 / CH1 / DL1 / V288).